The sequence spans 684 residues: DNA gyrase subunit B, novobiocin-sensitive (684 aa).

The tract at residues 1–22 (MADSGNPNENTPSVATGENGEV) is disordered. Residues 154–302 (VKTDGYRWTQ…RMLSVEIAMQ (149 aa)) are novobiocin-binding. Residues 463–577 (CEIFIVEGDS…AGHVYLSRPP (115 aa)) form the Toprim domain. Mg(2+) contacts are provided by glutamate 469, aspartate 542, and aspartate 544.

Belongs to the type II topoisomerase GyrB family. As to quaternary structure, heterotetramer, composed of two GyrA and two GyrB chains. In the heterotetramer, GyrA contains the active site tyrosine that forms a transient covalent intermediate with DNA, while GyrB binds cofactors and catalyzes ATP hydrolysis. Mg(2+) serves as cofactor. Mn(2+) is required as a cofactor. It depends on Ca(2+) as a cofactor.

The protein localises to the cytoplasm. The catalysed reaction is ATP-dependent breakage, passage and rejoining of double-stranded DNA.. Functionally, a type II topoisomerase that negatively supercoils closed circular double-stranded (ds) DNA in an ATP-dependent manner to modulate DNA topology and maintain chromosomes in an underwound state. Negative supercoiling favors strand separation, and DNA replication, transcription, recombination and repair, all of which involve strand separation. Also able to catalyze the interconversion of other topological isomers of dsDNA rings, including catenanes and knotted rings. Type II topoisomerases break and join 2 DNA strands simultaneously in an ATP-dependent manner. This Streptomyces niveus (Streptomyces spheroides) protein is DNA gyrase subunit B, novobiocin-sensitive.